We begin with the raw amino-acid sequence, 298 residues long: Bifunctional protein FolD (298 aa).

NADP(+) contacts are provided by residues 166–168, S195, and I236; that span reads GRS.

This sequence belongs to the tetrahydrofolate dehydrogenase/cyclohydrolase family. In terms of assembly, homodimer.

The catalysed reaction is (6R)-5,10-methylene-5,6,7,8-tetrahydrofolate + NADP(+) = (6R)-5,10-methenyltetrahydrofolate + NADPH. The enzyme catalyses (6R)-5,10-methenyltetrahydrofolate + H2O = (6R)-10-formyltetrahydrofolate + H(+). Its pathway is one-carbon metabolism; tetrahydrofolate interconversion. Functionally, catalyzes the oxidation of 5,10-methylenetetrahydrofolate to 5,10-methenyltetrahydrofolate and then the hydrolysis of 5,10-methenyltetrahydrofolate to 10-formyltetrahydrofolate. In Chlorobium phaeobacteroides (strain BS1), this protein is Bifunctional protein FolD.